Reading from the N-terminus, the 96-residue chain is MRHYEVMIILDPNQDERTVTPSLDKFLEAIRKDGGKVEKVDVWGKRRLAYPINKKEEGIYAVVELECESHSVLELDRRLNLNDSILRTKVLRTDSK.

It belongs to the bacterial ribosomal protein bS6 family.

Its function is as follows. Binds together with bS18 to 16S ribosomal RNA. The chain is Small ribosomal subunit protein bS6 from Corynebacterium aurimucosum (strain ATCC 700975 / DSM 44827 / CIP 107346 / CN-1) (Corynebacterium nigricans).